A 153-amino-acid polypeptide reads, in one-letter code: Aspartate carbamoyltransferase regulatory chain (153 aa).

The Zn(2+) site is built by cysteine 109, cysteine 114, cysteine 138, and cysteine 141.

This sequence belongs to the PyrI family. Contains catalytic and regulatory chains. Requires Zn(2+) as cofactor.

Its function is as follows. Involved in allosteric regulation of aspartate carbamoyltransferase. This is Aspartate carbamoyltransferase regulatory chain from Escherichia coli O7:K1 (strain IAI39 / ExPEC).